The following is a 255-amino-acid chain: tRNA pseudouridine synthase A (255 aa).

Aspartate 43 acts as the Nucleophile in catalysis. Residue tyrosine 94 coordinates substrate.

Belongs to the tRNA pseudouridine synthase TruA family.

The catalysed reaction is uridine(38/39/40) in tRNA = pseudouridine(38/39/40) in tRNA. Functionally, formation of pseudouridine at positions 38, 39 and 40 in the anticodon stem and loop of transfer RNAs. The protein is tRNA pseudouridine synthase A of Pyrobaculum islandicum (strain DSM 4184 / JCM 9189 / GEO3).